A 264-amino-acid chain; its full sequence is 3-methyl-2-oxobutanoate hydroxymethyltransferase (264 aa).

Residues D45 and D84 each contribute to the Mg(2+) site. 3-methyl-2-oxobutanoate is bound by residues 45–46 (DS), D84, and K112. E114 is a binding site for Mg(2+). The active-site Proton acceptor is the E181.

It belongs to the PanB family. As to quaternary structure, homodecamer; pentamer of dimers. Mg(2+) is required as a cofactor.

The protein resides in the cytoplasm. It carries out the reaction 3-methyl-2-oxobutanoate + (6R)-5,10-methylene-5,6,7,8-tetrahydrofolate + H2O = 2-dehydropantoate + (6S)-5,6,7,8-tetrahydrofolate. It functions in the pathway cofactor biosynthesis; (R)-pantothenate biosynthesis; (R)-pantoate from 3-methyl-2-oxobutanoate: step 1/2. Functionally, catalyzes the reversible reaction in which hydroxymethyl group from 5,10-methylenetetrahydrofolate is transferred onto alpha-ketoisovalerate to form ketopantoate. In Cronobacter sakazakii (strain ATCC BAA-894) (Enterobacter sakazakii), this protein is 3-methyl-2-oxobutanoate hydroxymethyltransferase.